A 226-amino-acid chain; its full sequence is PKHD-type hydroxylase Bind_0236 (226 aa).

The 101-residue stretch at Thr78–Ser178 folds into the Fe2OG dioxygenase domain. His96, Asp98, and His159 together coordinate Fe cation. Arg169 is a binding site for 2-oxoglutarate.

It depends on Fe(2+) as a cofactor. Requires L-ascorbate as cofactor.

The chain is PKHD-type hydroxylase Bind_0236 from Beijerinckia indica subsp. indica (strain ATCC 9039 / DSM 1715 / NCIMB 8712).